We begin with the raw amino-acid sequence, 383 residues long: Glucose-1-phosphate adenylyltransferase (383 aa).

Residues Tyr100, Gly165, 180 to 181, and Ser191 contribute to the alpha-D-glucose 1-phosphate site; that span reads EK.

Belongs to the bacterial/plant glucose-1-phosphate adenylyltransferase family. In terms of assembly, homotetramer.

It carries out the reaction alpha-D-glucose 1-phosphate + ATP + H(+) = ADP-alpha-D-glucose + diphosphate. It participates in glycan biosynthesis; glycogen biosynthesis. In terms of biological role, involved in the biosynthesis of ADP-glucose, a building block required for the elongation reactions to produce glycogen. Catalyzes the reaction between ATP and alpha-D-glucose 1-phosphate (G1P) to produce pyrophosphate and ADP-Glc. The polypeptide is Glucose-1-phosphate adenylyltransferase (Clostridium kluyveri (strain ATCC 8527 / DSM 555 / NBRC 12016 / NCIMB 10680 / K1)).